Reading from the N-terminus, the 254-residue chain is Diphthine synthase (254 aa).

Residues leucine 11, aspartate 87, isoleucine 90, 115-116 (SV), leucine 167, leucine 208, and histidine 233 contribute to the S-adenosyl-L-methionine site.

Belongs to the diphthine synthase family. Homodimer.

The catalysed reaction is 2-[(3S)-amino-3-carboxypropyl]-L-histidyl-[translation elongation factor 2] + 3 S-adenosyl-L-methionine = diphthine-[translation elongation factor 2] + 3 S-adenosyl-L-homocysteine + 3 H(+). It participates in protein modification; peptidyl-diphthamide biosynthesis. In terms of biological role, S-adenosyl-L-methionine-dependent methyltransferase that catalyzes the trimethylation of the amino group of the modified target histidine residue in translation elongation factor 2 (EF-2), to form an intermediate called diphthine. The three successive methylation reactions represent the second step of diphthamide biosynthesis. In Metallosphaera sedula (strain ATCC 51363 / DSM 5348 / JCM 9185 / NBRC 15509 / TH2), this protein is Diphthine synthase.